An 800-amino-acid polypeptide reads, in one-letter code: Probable inorganic carbon transporter subunit DabA (800 aa).

Residues Cys329, Asp331, His488, and Cys503 each contribute to the Zn(2+) site.

It belongs to the inorganic carbon transporter (TC 9.A.2) DabA family. As to quaternary structure, forms a complex with DabB. Zn(2+) serves as cofactor.

The protein resides in the cell inner membrane. Functionally, part of an energy-coupled inorganic carbon pump. This Roseobacter denitrificans (strain ATCC 33942 / OCh 114) (Erythrobacter sp. (strain OCh 114)) protein is Probable inorganic carbon transporter subunit DabA.